Reading from the N-terminus, the 237-residue chain is Uridylate kinase (237 aa).

Position 10–13 (10–13) interacts with ATP; that stretch reads KLSG. Glycine 52 contacts UMP. ATP contacts are provided by glycine 53 and arginine 57. Residues aspartate 72 and 133-140 contribute to the UMP site; that span reads TGNPFFTT. Threonine 160, tyrosine 166, and aspartate 169 together coordinate ATP.

Belongs to the UMP kinase family. As to quaternary structure, homohexamer.

It is found in the cytoplasm. The enzyme catalyses UMP + ATP = UDP + ADP. It participates in pyrimidine metabolism; CTP biosynthesis via de novo pathway; UDP from UMP (UMPK route): step 1/1. With respect to regulation, inhibited by UTP. Functionally, catalyzes the reversible phosphorylation of UMP to UDP. This is Uridylate kinase from Thiobacillus denitrificans (strain ATCC 25259 / T1).